Here is a 523-residue protein sequence, read N- to C-terminus: Succinate-semialdehyde dehydrogenase, mitochondrial (523 aa).

The N-terminal 35 residues, methionine 1–tyrosine 35, are a transit peptide targeting the mitochondrion. An N6-acetyllysine modification is found at lysine 74. Position 114 is an N6-acetyllysine; alternate (lysine 114). At lysine 114 the chain carries N6-succinyllysine; alternate. Lysine 123 carries the post-translational modification N6-succinyllysine. Lysine 128 carries the post-translational modification N6-acetyllysine. Lysine 172 carries the post-translational modification N6-succinyllysine. Residues arginine 201 and lysine 216–glutamate 219 contribute to the NAD(+) site. Substrate is bound at residue arginine 201. N6-acetyllysine; alternate is present on lysine 253. Lysine 253 is subject to N6-succinyllysine; alternate. Glycine 272–glycine 277 serves as a coordination point for NAD(+). Glutamate 294 functions as the Proton acceptor in the catalytic mechanism. Arginine 322 provides a ligand contact to substrate. The active-site Nucleophile is the cysteine 328. Cysteine 328 and cysteine 330 are joined by a disulfide. Lysine 347 is subject to N6-acetyllysine; alternate. At lysine 347 the chain carries N6-succinyllysine; alternate. Lysine 353 carries the post-translational modification N6-acetyllysine. Lysine 390 is subject to N6-succinyllysine. Residue lysine 399 is modified to N6-acetyllysine. Serine 403 carries the post-translational modification Phosphoserine. Position 486 (serine 486) interacts with substrate. Residue serine 487 is modified to Phosphoserine.

Belongs to the aldehyde dehydrogenase family. In terms of assembly, homotetramer.

The protein resides in the mitochondrion. It catalyses the reaction succinate semialdehyde + NAD(+) + H2O = succinate + NADH + 2 H(+). It functions in the pathway amino-acid degradation; 4-aminobutanoate degradation. With respect to regulation, redox-regulated. Inhibited under oxydizing conditions. Functionally, catalyzes one step in the degradation of the inhibitory neurotransmitter gamma-aminobutyric acid (GABA). This Mus musculus (Mouse) protein is Succinate-semialdehyde dehydrogenase, mitochondrial (Aldh5a1).